Here is a 631-residue protein sequence, read N- to C-terminus: Golgin subfamily A member 8A (631 aa).

Over residues 1-20 (MLPVDGEERKSEGSDTEGDR) the composition is skewed to basic and acidic residues. 4 disordered regions span residues 1–103 (MLPV…QEQA), 127–154 (KKQV…LEGQ), 426–447 (TSAE…ESSG), and 488–520 (PGDS…GAAG). Positions 78 to 92 (SLYLSPKSSSASSSL) are enriched in low complexity. Residues 93-103 (HARQSPCQEQA) are compositionally biased toward polar residues. The stretch at 110–468 (SIKISRLNDT…REHVEKLELG (359 aa)) forms a coiled coil. Positions 128–152 (KQVEHQLEEEKKANNEKQKAERELE) are enriched in basic and acidic residues. Residues 497–510 (PGGGHHQAGPGQGG) show a composition bias toward gly residues. The golgi-targeting domain stretch occupies residues 519-631 (AGDGVAACGS…CWAWLPRRRR (113 aa)).

Belongs to the GOLGA8 family.

The protein localises to the golgi apparatus. It is found in the golgi stack membrane. Functionally, may be involved in maintaining Golgi structure. The polypeptide is Golgin subfamily A member 8A (GOLGA8A) (Homo sapiens (Human)).